A 691-amino-acid polypeptide reads, in one-letter code: POU domain, class 6, transcription factor 2 (691 aa).

Over residues 25–36 the composition is skewed to basic and acidic residues; it reads MNAELRGEDKAA. 3 disordered regions span residues 25–93, 186–297, and 435–461; these read MNAE…PVGP, LQQQ…LQLV, and SQAS…SALS. The span at 186–195 shows a compositional bias: low complexity; the sequence is LQQQQQQQQQ. Positions 196 to 210 are enriched in pro residues; that stretch reads QPPPSTNQHPQPAPQ. Low complexity predominate over residues 211 to 220; that stretch reads APSQSQQQPL. Residues 221–238 show a composition bias toward pro residues; sequence QPTPPQQPPPASQQPPAP. Low complexity-rich tracts occupy residues 239 to 280 and 438 to 461; these read TSQL…SQSP and SMSQ…SALS. The POU-specific domain occupies 476–586; it reads VDGVNLEEIR…VLERWMAEAE (111 aa). The segment at residues 607 to 666 is a DNA-binding region (homeobox); that stretch reads KRKRRTSFTPQALEILNAHFEKNTHPSGQEMTEIAEKLNYDREVVRVWFCNKRQALKNTI.

The protein belongs to the POU transcription factor family. Class-6 subfamily. As to expression, expressed only within the CNS, where its expression is restricted to the medical habenulla, to a dispersed population of neurons in the dorsal hypothalamus, and to subsets of ganglion and amacrine cells in the retina.

Its subcellular location is the nucleus. Functionally, probable transcription factor likely to be involved in early steps in the differentiation of amacrine and ganglion cells. Recognizes and binds to the DNA sequence 5'-ATGCAAAT-3'. Isoform 1 does not bind DNA. The polypeptide is POU domain, class 6, transcription factor 2 (POU6F2) (Homo sapiens (Human)).